The primary structure comprises 164 residues: MAYLSDGFEMKSTREYERLGLGFVRFTRGLGRKRILISKRAPENDSPPVKRPSHETTESCRSLLETLHQDILIRVLCHVDHEDLATLKRVSKTIRKAVIEAKKSHFDYSTPKKRLPFRDAILILDSNSNSSSQDDEMEPPNAPIRRRFINRESDLSKISMVLFK.

A disordered region spans residues 38-57 (SKRAPENDSPPVKRPSHETT). Positions 61–109 (RSLLETLHQDILIRVLCHVDHEDLATLKRVSKTIRKAVIEAKKSHFDYS) constitute an F-box domain.

This chain is F-box protein At4g05010, found in Arabidopsis thaliana (Mouse-ear cress).